The primary structure comprises 81 residues: Apolipoprotein C-I, acidic form (81 aa).

The signal sequence occupies residues 1-24; the sequence is MRLFLSLLVVVLSMVLKGPTPAQG.

It belongs to the apolipoprotein C1 family.

The protein resides in the secreted. This Macaca fascicularis (Crab-eating macaque) protein is Apolipoprotein C-I, acidic form (APOC1A).